The primary structure comprises 353 residues: Photosystem II protein D1 (353 aa).

Position 2 is an N-acetylthreonine (Thr2). Thr2 is subject to Phosphothreonine. The next 3 membrane-spanning stretches (helical) occupy residues 29 to 46 (YIGW…TATA), 118 to 133 (HFLL…EWEL), and 142 to 156 (WIAV…AAAA). His118 serves as a coordination point for chlorophyll a. Position 126 (Tyr126) interacts with pheophytin a. [CaMn4O5] cluster contacts are provided by Asp170 and Glu189. The chain crosses the membrane as a helical span at residues 197–218 (FHMLGVAGVFGGSLFSAMHGSL). A chlorophyll a-binding site is contributed by His198. Residues His215 and 264-265 (SF) each bind a quinone. His215 lines the Fe cation pocket. A Fe cation-binding site is contributed by His272. The chain crosses the membrane as a helical span at residues 274–288 (FLAAWPVVGIWFTAL). Residues His332, Glu333, Asp342, and Ala344 each contribute to the [CaMn4O5] cluster site. Positions 345 to 353 (SVEAPSVNG) are excised as a propeptide.

Belongs to the reaction center PufL/M/PsbA/D family. As to quaternary structure, PSII is composed of 1 copy each of membrane proteins PsbA, PsbB, PsbC, PsbD, PsbE, PsbF, PsbH, PsbI, PsbJ, PsbK, PsbL, PsbM, PsbT, PsbX, PsbY, PsbZ, Psb30/Ycf12, at least 3 peripheral proteins of the oxygen-evolving complex and a large number of cofactors. It forms dimeric complexes. Requires The D1/D2 heterodimer binds P680, chlorophylls that are the primary electron donor of PSII, and subsequent electron acceptors. It shares a non-heme iron and each subunit binds pheophytin, quinone, additional chlorophylls, carotenoids and lipids. D1 provides most of the ligands for the Mn4-Ca-O5 cluster of the oxygen-evolving complex (OEC). There is also a Cl(-1) ion associated with D1 and D2, which is required for oxygen evolution. The PSII complex binds additional chlorophylls, carotenoids and specific lipids. as cofactor. Tyr-161 forms a radical intermediate that is referred to as redox-active TyrZ, YZ or Y-Z. In terms of processing, C-terminally processed by CTPA; processing is essential to allow assembly of the oxygen-evolving complex and thus photosynthetic growth.

It is found in the plastid. It localises to the chloroplast thylakoid membrane. It carries out the reaction 2 a plastoquinone + 4 hnu + 2 H2O = 2 a plastoquinol + O2. Its function is as follows. Photosystem II (PSII) is a light-driven water:plastoquinone oxidoreductase that uses light energy to abstract electrons from H(2)O, generating O(2) and a proton gradient subsequently used for ATP formation. It consists of a core antenna complex that captures photons, and an electron transfer chain that converts photonic excitation into a charge separation. The D1/D2 (PsbA/PsbD) reaction center heterodimer binds P680, the primary electron donor of PSII as well as several subsequent electron acceptors. The chain is Photosystem II protein D1 from Huperzia lucidula (Shining clubmoss).